A 477-amino-acid chain; its full sequence is Endo-1,4-beta-xylanase A (477 aa).

Residues 1–41 (MGSYALPRSGVRRSIRVLLLALVVGVLGTATALIAPPGAHA) form the signal peptide. Positions 42 to 340 (AESTLGAAAA…KAAYTAVLDA (299 aa)) constitute a GH10 domain. Glu-169 acts as the Proton donor in catalysis. The active-site Nucleophile is Glu-277. The 117-residue stretch at 361-477 (SGRCLDVPDA…NGSNQRWTRT (117 aa)) folds into the Ricin B-type lectin domain. Cystine bridges form between Cys-364–Cys-383, Cys-406–Cys-423, and Cys-447–Cys-466.

Belongs to the glycosyl hydrolase 10 (cellulase F) family.

The protein localises to the secreted. The catalysed reaction is Endohydrolysis of (1-&gt;4)-beta-D-xylosidic linkages in xylans.. The protein operates within glycan degradation; xylan degradation. In terms of biological role, contributes to hydrolyze hemicellulose, the major component of plant cell-walls. XLNA and XLNB seem to act sequentially on the substrate to yield xylobiose and xylose as carbon sources. This is Endo-1,4-beta-xylanase A (xlnA) from Streptomyces lividans.